Reading from the N-terminus, the 855-residue chain is DNA mismatch repair protein MutS (855 aa).

616-623 is an ATP binding site; the sequence is GPNMGGKS.

It belongs to the DNA mismatch repair MutS family.

Functionally, this protein is involved in the repair of mismatches in DNA. It is possible that it carries out the mismatch recognition step. This protein has a weak ATPase activity. The protein is DNA mismatch repair protein MutS of Salmonella schwarzengrund (strain CVM19633).